The following is a 451-amino-acid chain: 3-phosphoshikimate 1-carboxyvinyltransferase (451 aa).

Positions 38, 39, and 43 each coordinate 3-phosphoshikimate. Phosphoenolpyruvate is bound at residue Lys38. Phosphoenolpyruvate-binding residues include Gly111 and Arg140. 3-phosphoshikimate-binding residues include Ser185, Gln187, Asp335, and Lys362. Gln187 is a binding site for phosphoenolpyruvate. Asp335 acts as the Proton acceptor in catalysis. Phosphoenolpyruvate is bound by residues Arg366 and Arg408.

This sequence belongs to the EPSP synthase family. Monomer.

It is found in the cytoplasm. The enzyme catalyses 3-phosphoshikimate + phosphoenolpyruvate = 5-O-(1-carboxyvinyl)-3-phosphoshikimate + phosphate. It functions in the pathway metabolic intermediate biosynthesis; chorismate biosynthesis; chorismate from D-erythrose 4-phosphate and phosphoenolpyruvate: step 6/7. Catalyzes the transfer of the enolpyruvyl moiety of phosphoenolpyruvate (PEP) to the 5-hydroxyl of shikimate-3-phosphate (S3P) to produce enolpyruvyl shikimate-3-phosphate and inorganic phosphate. The sequence is that of 3-phosphoshikimate 1-carboxyvinyltransferase from Crocosphaera subtropica (strain ATCC 51142 / BH68) (Cyanothece sp. (strain ATCC 51142)).